The following is a 1038-amino-acid chain: Importin-7 (1038 aa).

Met1 bears the N-acetylmethionine mark. The region spanning 22–101 (AERQLNEAHK…RENIVEAIIH (80 aa)) is the Importin N-terminal domain. Positions 881–910 (EHENDSDDDDEAEDDDETEELGSDEDDIDE) are disordered. Positions 884–910 (NDSDDDDEAEDDDETEELGSDEDDIDE) are enriched in acidic residues. Residue Ser886 is modified to Phosphoserine. Phosphothreonine is present on Thr898. Phosphoserine is present on residues Ser903 and Ser1020.

Belongs to the importin beta family. In terms of assembly, forms a heterodimer with KPNB1. Interacts with histone H1. Interacts with H2A, H2B, H3 and H4 histones. Interacts with SNUPN and XPO1. Interacts with RPS7 and RPL5. Interacts with RPL23A (via BIB domain). Binds directly to nuclear pore complexes. Interacts with SMAD4 and NUP93; translocates SMAD4 to the nucleus through the NPC upon BMP7 stimulation resulting in activation of SMAD4 signaling. Interacts with phosphorylated SMAD2; the interaction facilitates translocation of SMAD2 to the nucleus. Interacts with SRP19. Interacts with RUNX2; the interaction inhibits RUNX2 nuclear translocation in osteoblasts. Interacts with HDAC6, DLX3 and KLF4; the interaction facilitates HDAC6, DLX3 and KLF4 nuclear translocation in dental papilla cells. As to quaternary structure, (Microbial infection) Interacts with HIV-1 reverse transcription complex integrase and rev.

It localises to the cytoplasm. Its subcellular location is the nucleus. In terms of biological role, functions in nuclear protein import, either by acting as autonomous nuclear transport receptor or as an adapter-like protein in association with the importin-beta subunit KPNB1. Acting autonomously, is thought to serve itself as receptor for nuclear localization signals (NLS) and to promote translocation of import substrates through the nuclear pore complex (NPC) by an energy requiring, Ran-dependent mechanism. At the nucleoplasmic side of the NPC, Ran binds to importin, the importin/substrate complex dissociates and importin is re-exported from the nucleus to the cytoplasm where GTP hydrolysis releases Ran. The directionality of nuclear import is thought to be conferred by an asymmetric distribution of the GTP- and GDP-bound forms of Ran between the cytoplasm and nucleus. Mediates autonomously the nuclear import of ribosomal proteins RPL23A, RPS7 and RPL5. In association with KPNB1 mediates the nuclear import of H1 histone and the Ran-binding site of IPO7 is not required but synergizes with that of KPNB1 in importin/substrate complex dissociation. Promotes odontoblast differentiation via promoting nuclear translocation of DLX3, KLF4, SMAD2, thereby facilitating the transcription of target genes that play a role in odontoblast differentiation. Facilitates BMP4-induced translocation of SMAD1 to the nucleus and recruitment to the MSX1 gene promoter, thereby promotes the expression of the odontogenic regulator MSX1 in dental mesenchymal cells. Also promotes odontoblast differentiation by facilitating the nuclear translocation of HDAC6 and subsequent repression of RUNX2 expression. Inhibits osteoblast differentiation by inhibiting nuclear translocation of RUNX2 and therefore inhibition of RUNX2 target gene transcription. In vitro, mediates nuclear import of H2A, H2B, H3 and H4 histones. Its function is as follows. (Microbial infection) Mediates the nuclear import of HIV-1 reverse transcription complex (RTC) integrase. Binds and mediates the nuclear import of HIV-1 Rev. This is Importin-7 (IPO7) from Homo sapiens (Human).